A 232-amino-acid chain; its full sequence is Large ribosomal subunit protein uL1 (232 aa).

The protein belongs to the universal ribosomal protein uL1 family. As to quaternary structure, part of the 50S ribosomal subunit.

Its function is as follows. Binds directly to 23S rRNA. The L1 stalk is quite mobile in the ribosome, and is involved in E site tRNA release. Functionally, protein L1 is also a translational repressor protein, it controls the translation of the L11 operon by binding to its mRNA. The protein is Large ribosomal subunit protein uL1 of Burkholderia vietnamiensis (strain G4 / LMG 22486) (Burkholderia cepacia (strain R1808)).